Reading from the N-terminus, the 455-residue chain is GTPase Der (455 aa).

EngA-type G domains follow at residues 4-174 (PIVA…PAGQ) and 183-358 (LKIA…SERN). Residues 10 to 17 (GRPNVGKS), 57 to 61 (DTAGL), 126 to 129 (NKAD), 189 to 196 (GRPNVGKS), 236 to 240 (DTAGI), and 301 to 304 (NKWD) contribute to the GTP site. A KH-like domain is found at 359 to 444 (KRVSTSDINN…PIILVFKGRE (86 aa)).

This sequence belongs to the TRAFAC class TrmE-Era-EngA-EngB-Septin-like GTPase superfamily. EngA (Der) GTPase family. In terms of assembly, associates with the 50S ribosomal subunit.

Its function is as follows. GTPase that plays an essential role in the late steps of ribosome biogenesis. The protein is GTPase Der of Herpetosiphon aurantiacus (strain ATCC 23779 / DSM 785 / 114-95).